Reading from the N-terminus, the 430-residue chain is Adenylosuccinate synthetase (430 aa).

Residues 12-18 (GDEGKGK) and 40-42 (GHT) each bind GTP. D13 serves as the catalytic Proton acceptor. Mg(2+)-binding residues include D13 and G40. IMP-binding positions include 13-16 (DEGK), 38-41 (NAGH), T130, R144, Q225, T240, and R304. Catalysis depends on H41, which acts as the Proton donor. Residue 300–306 (ATTGRPR) participates in substrate binding. GTP contacts are provided by residues R306, 332–334 (KLD), and 414–416 (SIG).

Belongs to the adenylosuccinate synthetase family. Homodimer. Mg(2+) serves as cofactor.

The protein resides in the cytoplasm. It catalyses the reaction IMP + L-aspartate + GTP = N(6)-(1,2-dicarboxyethyl)-AMP + GDP + phosphate + 2 H(+). Its pathway is purine metabolism; AMP biosynthesis via de novo pathway; AMP from IMP: step 1/2. Its function is as follows. Plays an important role in the de novo pathway of purine nucleotide biosynthesis. Catalyzes the first committed step in the biosynthesis of AMP from IMP. The chain is Adenylosuccinate synthetase from Geobacter metallireducens (strain ATCC 53774 / DSM 7210 / GS-15).